Here is a 444-residue protein sequence, read N- to C-terminus: Transcription activator AKTR-3 (444 aa).

The segment at residues 16–43 (CDFCTQSKLRCNKNKPSCRRCTIQQQPC) is a DNA-binding region (zn(2)-C6 fungal-type). The interval 49–89 (RRTGRPPKHPRTANDCQEANGQHGEQDPVTSTPGGSCQQQS) is disordered. The segment covering 50–59 (RTGRPPKHPR) has biased composition (basic residues). Polar residues predominate over residues 76-89 (PVTSTPGGSCQQQS).

The protein localises to the nucleus. Transcription factor that regulates the expression of the gene clusters that mediate the biosynthesis of the host-selective toxins (HSTs) AK-toxins responsible for Japanese pear black spot disease by the Japanese pear pathotype. AK-toxins are esters of 9,10-epoxy 8-hydroxy 9-methyldecatrienoic acid (EDA). On cellular level, AK-toxins affect plasma membrane of susceptible cells and cause a sudden increase in loss of K(+) after a few minutes of toxin treatment. The chain is Transcription activator AKTR-3 from Alternaria alternata (Alternaria rot fungus).